The chain runs to 179 residues: Large ribosomal subunit protein uL5 (179 aa).

Belongs to the universal ribosomal protein uL5 family. In terms of assembly, part of the 50S ribosomal subunit; part of the 5S rRNA/L5/L18/L25 subcomplex. Contacts the 5S rRNA and the P site tRNA. Forms a bridge to the 30S subunit in the 70S ribosome.

In terms of biological role, this is one of the proteins that bind and probably mediate the attachment of the 5S RNA into the large ribosomal subunit, where it forms part of the central protuberance. In the 70S ribosome it contacts protein S13 of the 30S subunit (bridge B1b), connecting the 2 subunits; this bridge is implicated in subunit movement. Contacts the P site tRNA; the 5S rRNA and some of its associated proteins might help stabilize positioning of ribosome-bound tRNAs. This chain is Large ribosomal subunit protein uL5, found in Variovorax paradoxus (strain S110).